A 945-amino-acid chain; its full sequence is Glutamyl aminopeptidase (945 aa).

Residues 1–18 (MNFAEEEPSKKYCIKGKH) lie on the Cytoplasmic side of the membrane. The helical; Signal-anchor for type II membrane protein transmembrane segment at 19-39 (VAIICGVVVAVGLIVGLSVGL) threads the bilayer. The Extracellular segment spans residues 40-945 (TRSCEQDTTP…SIREWFASLP (906 aa)). The tract at residues 43 to 77 (CEQDTTPAPSQPPPEASTALPPQDQNVCPDSEDES) is disordered. Asn116 and Asn189 each carry an N-linked (GlcNAc...) asparagine glycan. Glu215 provides a ligand contact to substrate. Asn316 is a glycosylation site (N-linked (GlcNAc...) asparagine). 349–353 (GAMEN) is a substrate binding site. His385 serves as a coordination point for Zn(2+). Glu386 functions as the Proton acceptor in the catalytic mechanism. Zn(2+) contacts are provided by His389 and Glu408. Residues Asn546, Asn601, Asn637, Asn669, Asn754, and Asn792 are each glycosylated (N-linked (GlcNAc...) asparagine). Arg878 is a substrate binding site.

It belongs to the peptidase M1 family. In terms of assembly, homodimer; disulfide-linked. Requires Zn(2+) as cofactor. Early B-lineage cells and certain stromal cell of hemopoietic tissues. Also expressed by capillary endothelial cells, placenta, and epithelial cells of the intestine and proximal renal tubules.

The protein localises to the cell membrane. It carries out the reaction Release of N-terminal glutamate (and to a lesser extent aspartate) from a peptide.. Its activity is regulated as follows. Substrate specificity is modulated by calcium which enhances the enzymatic activity for cleavage of acidic residues while reducing its activity with basic residues. Inhibited by aminopeptidase inhibitors amastatin and bestatin. Functionally, regulates central hypertension through its calcium-modulated preference to cleave N-terminal acidic residues from peptides such as angiotensin II. In Mus musculus (Mouse), this protein is Glutamyl aminopeptidase (Enpep).